We begin with the raw amino-acid sequence, 99 residues long: Protein Frey (99 aa).

A helical transmembrane segment spans residues 13 to 29 (AGLSLFALYLVLAAALL). Residues 64-90 (RPKHPWPRGPRPLLSRAQQRKRDGPDM) form a disordered region.

As to quaternary structure, interacts with SPPL2C (via active sites); the interaction stabilizes FREY1 protein and inhibits SPPL2C proteolytic activity. Interacts with IZUMO1; the interaction retains IZUMO1 at the endoplasmic reticulum membrane and coordinates IZUMO1 complex assembly.

It is found in the endoplasmic reticulum membrane. In terms of biological role, key regulator for male fertility expressed transiently in round spermatids where it recruits IZUMO1 at the endoplasmic reticulum (ER) membrane and coordinates the oolemmal binding multimeric complex (IZUMO1 complex) assembly. Upon complete assembly of the IZUMO1 complex, its ER retention is released, facilitating IZUMO1 complex export to the acrosome. Through the interaction with SPPL2C, inhibits its intramembrane protease activity directly accessing the catalytic center of an I-CLiP. The chain is Protein Frey (FREY1) from Bos taurus (Bovine).